A 1361-amino-acid chain; its full sequence is DNA-directed RNA polymerase subunit beta (1361 aa).

Belongs to the RNA polymerase beta chain family. As to quaternary structure, the RNAP catalytic core consists of 2 alpha, 1 beta, 1 beta' and 1 omega subunit. When a sigma factor is associated with the core the holoenzyme is formed, which can initiate transcription.

The enzyme catalyses RNA(n) + a ribonucleoside 5'-triphosphate = RNA(n+1) + diphosphate. In terms of biological role, DNA-dependent RNA polymerase catalyzes the transcription of DNA into RNA using the four ribonucleoside triphosphates as substrates. This chain is DNA-directed RNA polymerase subunit beta, found in Cellvibrio japonicus (strain Ueda107) (Pseudomonas fluorescens subsp. cellulosa).